Here is a 385-residue protein sequence, read N- to C-terminus: Probable caffeine synthase MTL2 (385 aa).

S-adenosyl-L-homocysteine is bound by residues tyrosine 18, cysteine 62, asparagine 67, aspartate 101, leucine 102, serine 140, phenylalanine 141, and cysteine 157. Caffeine contacts are provided by tyrosine 158, histidine 161, and tryptophan 162. A Mg(2+)-binding site is contributed by asparagine 179. Residue threonine 238 participates in caffeine binding. Residues aspartate 261, phenylalanine 263, and asparagine 264 each contribute to the Mg(2+) site. Tyrosine 369 is a binding site for caffeine.

The protein belongs to the methyltransferase superfamily. Type-7 methyltransferase family. Mg(2+) is required as a cofactor.

The protein operates within alkaloid biosynthesis. Its function is as follows. May be involved in the biosynthesis of caffeine. The polypeptide is Probable caffeine synthase MTL2 (Coffea canephora (Robusta coffee)).